The sequence spans 595 residues: 73 kDa paraflagellar rod protein (595 aa).

Residues 294–317 (DAEATKRHAANKEKSDRYIRENED) are disordered. Positions 317–337 (DRQEETWNKIQDLERQLQKLG) are calmodulin-binding.

In terms of assembly, heterodimer of a 69 kDa and a 73 kDa protein.

It localises to the cell projection. The protein resides in the cilium. Its subcellular location is the flagellum. It is found in the cytoplasm. The protein localises to the cytoskeleton. Major component of the paraflagellar rod (PFR). The PFR is a highly ordered lattices of fibrous proteins that are located inside the flagellum and assume a fixed orientation with respect to the microtubular axoneme. This Trypanosoma brucei brucei protein is 73 kDa paraflagellar rod protein (PFRC).